A 219-amino-acid chain; its full sequence is Small ribosomal subunit protein uS5 (219 aa).

Residues 1–32 (MSHPQSRPGGRDGRPRRRREPREEAPWVPKTA) form a disordered region. Positions 68–131 (LKTEVVDVGI…NQALLNVGPI (64 aa)) constitute an S5 DRBM domain.

This sequence belongs to the universal ribosomal protein uS5 family. In terms of assembly, part of the 30S ribosomal subunit. Contacts protein S4.

In terms of biological role, with S4 and S12 plays an important role in translational accuracy. The chain is Small ribosomal subunit protein uS5 (rps5) from Cenarchaeum symbiosum (strain A).